Here is a 142-residue protein sequence, read N- to C-terminus: Nucleoside diphosphate kinase (142 aa).

Lys-11, Phe-59, Arg-87, Thr-93, Arg-104, and Asn-114 together coordinate ATP. His-117 serves as the catalytic Pros-phosphohistidine intermediate.

It belongs to the NDK family. In terms of assembly, homotetramer. It depends on Mg(2+) as a cofactor.

The protein localises to the cytoplasm. The enzyme catalyses a 2'-deoxyribonucleoside 5'-diphosphate + ATP = a 2'-deoxyribonucleoside 5'-triphosphate + ADP. It catalyses the reaction a ribonucleoside 5'-diphosphate + ATP = a ribonucleoside 5'-triphosphate + ADP. Its function is as follows. Major role in the synthesis of nucleoside triphosphates other than ATP. The ATP gamma phosphate is transferred to the NDP beta phosphate via a ping-pong mechanism, using a phosphorylated active-site intermediate. This Photobacterium profundum (strain SS9) protein is Nucleoside diphosphate kinase.